The primary structure comprises 188 residues: Ion-translocating oxidoreductase complex subunit B (188 aa).

Residues 1-26 (MNGVFLAIGALLPICLAGGALLGYAA) are hydrophobic. The region spanning 32–90 (QGDPVAEQVNALLPQTQCGQCGYPGCKPYAEAIAAGDKINKCPPGGEATIRALADLLDL) is the 4Fe-4S domain. The [4Fe-4S] cluster site is built by Cys-49, Cys-52, Cys-57, Cys-73, Cys-113, Cys-116, Cys-119, Cys-123, Cys-143, Cys-146, Cys-149, and Cys-153. 4Fe-4S ferredoxin-type domains lie at 104 to 133 (RVAYIREAECIGCTKCIQACPVDAIVGAAR) and 134 to 163 (LMHTVIADECTGCDLCLEPCPVDCIEMRET).

It belongs to the 4Fe4S bacterial-type ferredoxin family. RnfB subfamily. As to quaternary structure, the complex is composed of six subunits: RnfA, RnfB, RnfC, RnfD, RnfE and RnfG. [4Fe-4S] cluster serves as cofactor.

The protein resides in the cell inner membrane. Part of a membrane-bound complex that couples electron transfer with translocation of ions across the membrane. The sequence is that of Ion-translocating oxidoreductase complex subunit B from Pseudomonas aeruginosa (strain UCBPP-PA14).